Reading from the N-terminus, the 144-residue chain is Probable transcription termination protein NusA (144 aa).

The region spanning 101-144 (RTDIVVGVKPEEIGKVIGKEGKNIKLFKDAVSRYFNVNSISVKQ) is the KH domain.

It belongs to the NusA family.

Its subcellular location is the cytoplasm. Its function is as follows. Participates in transcription termination. This Thermoplasma acidophilum (strain ATCC 25905 / DSM 1728 / JCM 9062 / NBRC 15155 / AMRC-C165) protein is Probable transcription termination protein NusA.